Consider the following 252-residue polypeptide: 5'-nucleotidase SurE (252 aa).

A divalent metal cation is bound by residues D8, D9, S39, and N91.

This sequence belongs to the SurE nucleotidase family. A divalent metal cation serves as cofactor.

It localises to the cytoplasm. The enzyme catalyses a ribonucleoside 5'-phosphate + H2O = a ribonucleoside + phosphate. In terms of biological role, nucleotidase that shows phosphatase activity on nucleoside 5'-monophosphates. This is 5'-nucleotidase SurE from Bordetella petrii (strain ATCC BAA-461 / DSM 12804 / CCUG 43448).